A 231-amino-acid polypeptide reads, in one-letter code: Protein RhiA (231 aa).

Functionally, may be involved in plant-microbe interaction. The polypeptide is Protein RhiA (rhiA) (Rhizobium leguminosarum bv. viciae).